Reading from the N-terminus, the 615-residue chain is Chaperone protein DnaK (615 aa).

Threonine 195 is subject to Phosphothreonine; by autocatalysis. Residues 592–615 (EKGAQAASGKGPDDVIDADYKPAD) form a disordered region.

The protein belongs to the heat shock protein 70 family.

In terms of biological role, acts as a chaperone. The polypeptide is Chaperone protein DnaK (Thermus thermophilus (strain ATCC BAA-163 / DSM 7039 / HB27)).